The primary structure comprises 859 residues: Collagen alpha-1(II) chain (859 aa).

The interval 1–607 (LQGLPGKDGE…LGQTEKGPDP (607 aa)) is disordered. 2 positions are modified to 4-hydroxyproline: P31 and P40. 3-hydroxyproline is present on P42. 4-hydroxyproline is present on residues P43 and P46. Positions 78–121 (ERGSPGAQGLQGPRGLPGTPGTDGPKGATGPAGPNGAQGPPGLQ) are enriched in low complexity. The segment covering 136–147 (KGDRGDVGEKGP) has biased composition (basic and acidic residues). Low complexity-rich tracts occupy residues 204–220 (PAGF…PGAK) and 249–277 (PTGV…AGRV). 3-hydroxyproline is present on P279. The span at 279-292 (PPGPNGNPGPPGPP) shows a compositional bias: pro residues. 4-hydroxyproline occurs at positions 280, 286, and 292. The span at 306-321 (DAGPPGRAGDPGLQGP) shows a compositional bias: low complexity. Over residues 487–501 (RGDKGETGEAGERGL) the composition is skewed to basic and acidic residues. The triple-helical region stretch occupies residues 491 to 586 (GETGEAGERG…PGPPGPPGPP (96 aa)). Position 516 is a 3-hydroxyproline (P516). The span at 520 to 529 (SGDQGAAGPA) shows a compositional bias: low complexity. P553 carries the 4-hydroxyproline modification. A 3-hydroxyproline modification is found at P558. Position 559 is a 4-hydroxyproline (P559). Residues 570 to 586 (PAGPPGNPGPPGPPGPP) show a composition bias toward pro residues. P573 is subject to 3-hydroxyproline. 4-hydroxyproline is present on residues P574 and P577. The residue at position 579 (P579) is a 3-hydroxyproline. P580 and P583 each carry 4-hydroxyproline. A 3-hydroxyproline modification is found at P585. P586 bears the 4-hydroxyproline mark. Residues 587–613 (GTGIDMSAFAGLGQTEKGPDPIRYMRA) form a nonhelical region (C-terminal) region. The propeptide at 614–859 (DEAAGGLRQH…GVDIGPVCFL (246 aa)) is C-terminal propeptide. A Fibrillar collagen NC1 domain is found at 625-859 (VEVDATLKSL…GVDIGPVCFL (235 aa)). 3 cysteine pairs are disulfide-bonded: C655–C687, C695–C857, and C765–C810. 5 residues coordinate Ca(2+): D673, N675, Q676, C678, and D681. N760 carries N-linked (GlcNAc...) asparagine glycosylation.

Belongs to the fibrillar collagen family. As to quaternary structure, homotrimers of alpha 1(II) chains. Contains mostly 4-hydroxyproline. Prolines at the third position of the tripeptide repeating unit (G-X-P) are 4-hydroxylated in some or all of the chains. In terms of processing, contains 3-hydroxyproline at a few sites. This modification occurs on the first proline residue in the sequence motif Gly-Pro-Hyp, where Hyp is 4-hydroxyproline. Post-translationally, lysine residues at the third position of the tripeptide repeating unit (G-X-Y) are 5-hydroxylated in some or all of the chains. O-glycosylated on hydroxylated lysine residues. The O-linked glycan consists of a Glc-Gal disaccharide.

The protein localises to the secreted. Its subcellular location is the extracellular space. The protein resides in the extracellular matrix. Functionally, type II collagen is specific for cartilaginous tissues. It is essential for the normal embryonic development of the skeleton, for linear growth and for the ability of cartilage to resist compressive forces. The polypeptide is Collagen alpha-1(II) chain (Gallus gallus (Chicken)).